We begin with the raw amino-acid sequence, 610 residues long: NTPase KAP family P-loop domain-containing protein 1 (610 aa).

The KAP NTPase domain occupies 1–414; it reads MQQEAAQRES…NTVPITVRLL (414 aa). Transmembrane regions (helical) follow at residues 22-42, 118-138, and 157-177; these read AVSG…QPII, VCLG…LLYL, and VFGG…VYSV. A disordered region spans residues 540–587; sequence ALKPPSPPKSPTRDTPHAAHRANSASRAPPSGRASGQAGEGHHTGDLA. Residues 560-575 are compositionally biased toward low complexity; sequence RANSASRAPPSGRASG.

The protein localises to the membrane. The sequence is that of NTPase KAP family P-loop domain-containing protein 1 (NKPD1) from Homo sapiens (Human).